A 130-amino-acid polypeptide reads, in one-letter code: D-ribose pyranase (130 aa).

His-20 functions as the Proton donor in the catalytic mechanism. Substrate-binding positions include Asp-28, His-97, and 119–121 (YAN).

This sequence belongs to the RbsD / FucU family. RbsD subfamily. As to quaternary structure, homodecamer.

The protein localises to the cytoplasm. The enzyme catalyses beta-D-ribopyranose = beta-D-ribofuranose. It functions in the pathway carbohydrate metabolism; D-ribose degradation; D-ribose 5-phosphate from beta-D-ribopyranose: step 1/2. Catalyzes the interconversion of beta-pyran and beta-furan forms of D-ribose. The chain is D-ribose pyranase from Thermoanaerobacter pseudethanolicus (strain ATCC 33223 / 39E) (Clostridium thermohydrosulfuricum).